Consider the following 320-residue polypeptide: Transaldolase (320 aa).

The Schiff-base intermediate with substrate role is filled by K135.

It belongs to the transaldolase family. Type 1 subfamily. In terms of assembly, homodimer.

The protein localises to the cytoplasm. It carries out the reaction D-sedoheptulose 7-phosphate + D-glyceraldehyde 3-phosphate = D-erythrose 4-phosphate + beta-D-fructose 6-phosphate. It functions in the pathway carbohydrate degradation; pentose phosphate pathway; D-glyceraldehyde 3-phosphate and beta-D-fructose 6-phosphate from D-ribose 5-phosphate and D-xylulose 5-phosphate (non-oxidative stage): step 2/3. Its function is as follows. Transaldolase is important for the balance of metabolites in the pentose-phosphate pathway. The chain is Transaldolase from Colwellia psychrerythraea (strain 34H / ATCC BAA-681) (Vibrio psychroerythus).